Here is a 701-residue protein sequence, read N- to C-terminus: DNA ligase (701 aa).

Residues 1 to 21 (MSAKSTPDAGPQEQATEAEAE) are disordered. NAD(+)-binding positions include 50–54 (DADFD), 100–101 (SL), and Glu130. The active-site N6-AMP-lysine intermediate is the Lys132. 4 residues coordinate NAD(+): Arg153, Glu193, Lys309, and Lys333. Zn(2+) is bound by residues Cys427, Cys430, Cys446, and Cys452. The region spanning 616–701 (SIARTLEGLS…LENGPQAPEG (86 aa)) is the BRCT domain.

Belongs to the NAD-dependent DNA ligase family. LigA subfamily. Mg(2+) is required as a cofactor. Mn(2+) serves as cofactor.

The enzyme catalyses NAD(+) + (deoxyribonucleotide)n-3'-hydroxyl + 5'-phospho-(deoxyribonucleotide)m = (deoxyribonucleotide)n+m + AMP + beta-nicotinamide D-nucleotide.. Functionally, DNA ligase that catalyzes the formation of phosphodiester linkages between 5'-phosphoryl and 3'-hydroxyl groups in double-stranded DNA using NAD as a coenzyme and as the energy source for the reaction. It is essential for DNA replication and repair of damaged DNA. The sequence is that of DNA ligase from Mycobacterium sp. (strain KMS).